The sequence spans 275 residues: WIMGHMVNAIEQVDEFLNLGANAIEFDIDFDENGIAKYTHHGIPCDCGRLCTKSAVFTEYLDNVRQVTSPGDPKFRKELVLLALDLKLQRISSEKAYVAGVDVATKLLDHYWKRGWNGGRAYILLNIPLVEDYEFIKGFKDTLRKEGHEQYNAKVGINFTGNEDLDEIRKVLEKLGEDEHIWQADGITSCFPRGTDRLEKALEKRDTPGYKYISKVYAWTLVRSSIMRRSLRLNVDGVMSNYPDRVVGVLKEKEFADKFRLATYADNPWEKFTSI.

Residue H5 is part of the active site. Residues E25 and D27 each coordinate Mg(2+). The Nucleophile role is filled by H41. 2 disulfide bridges follow: C45-C51 and C47-C190. D85 provides a ligand contact to Mg(2+).

It belongs to the arthropod phospholipase D family. Class II subfamily. Mg(2+) serves as cofactor. Expressed by the venom gland.

The protein resides in the secreted. The catalysed reaction is an N-(acyl)-sphingosylphosphocholine = an N-(acyl)-sphingosyl-1,3-cyclic phosphate + choline. It catalyses the reaction an N-(acyl)-sphingosylphosphoethanolamine = an N-(acyl)-sphingosyl-1,3-cyclic phosphate + ethanolamine. The enzyme catalyses a 1-acyl-sn-glycero-3-phosphocholine = a 1-acyl-sn-glycero-2,3-cyclic phosphate + choline. It carries out the reaction a 1-acyl-sn-glycero-3-phosphoethanolamine = a 1-acyl-sn-glycero-2,3-cyclic phosphate + ethanolamine. Dermonecrotic toxins cleave the phosphodiester linkage between the phosphate and headgroup of certain phospholipids (sphingolipid and lysolipid substrates), forming an alcohol (often choline) and a cyclic phosphate. This toxin acts on sphingomyelin (SM). It may also act on ceramide phosphoethanolamine (CPE), lysophosphatidylcholine (LPC) and lysophosphatidylethanolamine (LPE), but not on lysophosphatidylserine (LPS), and lysophosphatidylglycerol (LPG). It acts by transphosphatidylation, releasing exclusively cyclic phosphate products as second products. Induces dermonecrosis, hemolysis, increased vascular permeability, edema, inflammatory response, and platelet aggregation. This is Dermonecrotic toxin SpaSicTox-betaIIA2 from Sicarius patagonicus (Six-eyed sand spider).